Consider the following 348-residue polypeptide: Uroporphyrinogen decarboxylase (348 aa).

Residues Arg27–Arg31, Phe46, Asp76, Tyr152, Ser207, and His320 each bind substrate.

It belongs to the uroporphyrinogen decarboxylase family. In terms of assembly, homodimer.

It is found in the cytoplasm. The catalysed reaction is uroporphyrinogen III + 4 H(+) = coproporphyrinogen III + 4 CO2. It functions in the pathway porphyrin-containing compound metabolism; protoporphyrin-IX biosynthesis; coproporphyrinogen-III from 5-aminolevulinate: step 4/4. Its function is as follows. Catalyzes the decarboxylation of four acetate groups of uroporphyrinogen-III to yield coproporphyrinogen-III. The protein is Uroporphyrinogen decarboxylase of Bacillus cereus (strain G9842).